We begin with the raw amino-acid sequence, 71 residues long: UPF0346 protein SPP_0954 (71 aa).

This sequence belongs to the UPF0346 family.

The protein is UPF0346 protein SPP_0954 of Streptococcus pneumoniae (strain P1031).